We begin with the raw amino-acid sequence, 495 residues long: Muscle LIM protein Mlp84B (495 aa).

Positions 12–63 constitute an LIM zinc-binding 1 domain; sequence CPRCGKSVYAAEERLAGGYVFHKNCFKCGMCNKSLDSTNCTEHERELYCKTC. The Nuclear localization signal signature appears at 66 to 71; the sequence is RKFGPK. Residues 120–172 form the LIM zinc-binding 2 domain; sequence CPRCGGYVYAAEQMLARGRSWHKECFKCGTCKKGLDSILCCEAPDKNIYCKGC. Residues 175–180 carry the Nuclear localization signal motif; that stretch reads KKFGPK. LIM zinc-binding domains follow at residues 222–274, 325–377, and 421–473; these read CPRC…CRTC and CPRC…CRAC.

In terms of tissue distribution, in the embryo, expression is restricted to the somatic, visceral, and pharyngeal muscles. Within the somatic musculature, expression is localized at the ends of muscles fibers at the point of attachment to the epidermis (at protein level). There is no expression in cardiac mesoderm or in fat body.

It localises to the cytoplasm. The protein resides in the nucleus. Plays a role in cell differentiation late in myogenesis. Transcription factor Mef2 is essential for expression. The protein is Muscle LIM protein Mlp84B of Drosophila melanogaster (Fruit fly).